The following is a 21-amino-acid chain: Peptide Hact-2 (21 aa).

3 disulfide bridges follow: cysteine 1–cysteine 18, cysteine 5–cysteine 14, and cysteine 9–cysteine 20.

As to expression, expressed in tentacles.

It is found in the nematocyst. It localises to the secreted. Functionally, peptide of unknown function. Does not exhibit antimicrobial activity against Escherichia coli and Staphylococcus aureus. Promotes cell proliferation of human fibroblast skin cells. Does not exhibit any effect on voltage-gated ion channels, including potassium, sodium, and calcium channels. This chain is Peptide Hact-2, found in Heliofungia actiniformis (Mushroom coral).